The following is a 751-amino-acid chain: 1,3-beta-galactosyl-N-acetylhexosamine phosphorylase (751 aa).

Aspartate 313 (proton donor) is an active-site residue.

Belongs to the glycoside hydrolase 112 family. In terms of assembly, homodimer.

It catalyses the reaction beta-D-galactosyl-(1-&gt;3)-N-acetyl-D-glucosamine + phosphate = alpha-D-galactose 1-phosphate + N-acetyl-D-glucosamine. Its function is as follows. Reversibly phosphorolyzes lacto-N-biose to Gal1-P and N-acetylglucosamine (GlcNAc) and galacto-N-biose to Gal1-P and N-acetylgalactosamine (GalNAc). Involved in the lacto-N-biose I/galacto-N-biose (LNB/GNB) degradation pathway, which is important for host intestinal colonization by bifidobacteria. In Bifidobacterium longum subsp. longum (strain ATCC 15707 / DSM 20219 / JCM 1217 / NCTC 11818 / E194b), this protein is 1,3-beta-galactosyl-N-acetylhexosamine phosphorylase (lnpA).